Reading from the N-terminus, the 113-residue chain is MATGETGIIGKGIVIKGNLTGGGDLVIEGRVEGQIALKNHLTIESTGKVQADIRAEELTINGEASGNIDASSRVAINASAKVAGDIKAPRVVIEDGAVFNGSIEMDVRLPDDI.

Belongs to the bactofilin family. Interacts with BacO and BacP, the 3 proteins colocalize as an extended structure.

Its subcellular location is the cytoplasm. It is found in the cytoskeleton. In terms of biological role, a non-essential component of the chromosome segregation machinery. Positions the ParA-ParB-parS chromosome segregation machinery within the cell; BacP seems to be the most important bactofilin in this process. Forms a heteropolymeric, subpolar scaffold in the cell; BacP probably forms the core, BacO contributes to position and integrity while BacN does not seem to contribute to assembly. In Myxococcus xanthus (strain DK1622), this protein is Bactofilin BacN.